The following is a 338-amino-acid chain: Phenylalanine--tRNA ligase alpha subunit (338 aa).

Residue E253 coordinates Mg(2+).

This sequence belongs to the class-II aminoacyl-tRNA synthetase family. Phe-tRNA synthetase alpha subunit type 1 subfamily. In terms of assembly, tetramer of two alpha and two beta subunits. Mg(2+) serves as cofactor.

The protein localises to the cytoplasm. It catalyses the reaction tRNA(Phe) + L-phenylalanine + ATP = L-phenylalanyl-tRNA(Phe) + AMP + diphosphate + H(+). This Citrifermentans bemidjiense (strain ATCC BAA-1014 / DSM 16622 / JCM 12645 / Bem) (Geobacter bemidjiensis) protein is Phenylalanine--tRNA ligase alpha subunit.